Consider the following 628-residue polypeptide: Glutamyl-tRNA(Gln) amidotransferase subunit E (628 aa).

The protein belongs to the GatB/GatE family. GatE subfamily. In terms of assembly, heterodimer of GatD and GatE.

The enzyme catalyses L-glutamyl-tRNA(Gln) + L-glutamine + ATP + H2O = L-glutaminyl-tRNA(Gln) + L-glutamate + ADP + phosphate + H(+). Allows the formation of correctly charged Gln-tRNA(Gln) through the transamidation of misacylated Glu-tRNA(Gln) in organisms which lack glutaminyl-tRNA synthetase. The reaction takes place in the presence of glutamine and ATP through an activated gamma-phospho-Glu-tRNA(Gln). The GatDE system is specific for glutamate and does not act on aspartate. The sequence is that of Glutamyl-tRNA(Gln) amidotransferase subunit E from Sulfurisphaera tokodaii (strain DSM 16993 / JCM 10545 / NBRC 100140 / 7) (Sulfolobus tokodaii).